A 192-amino-acid chain; its full sequence is Putative acetyltransferase SH0499 (192 aa).

This sequence belongs to the transferase hexapeptide repeat family.

The chain is Putative acetyltransferase SH0499 from Staphylococcus haemolyticus (strain JCSC1435).